The chain runs to 229 residues: MMKALLVADDPVSVNLVFENHTQCGYEVIHYRSALKALDNMEEIQPQLLFINASDFPRHWRVLTQFFKHQSVCGARVILLVNTPSSSLSARQVAQAGVHALIDYTLSPEEGRKALCGVLTPSACAGSVDVGHAHTCQADFVFTNPCSGSIVTGTVREVSEEGVDFIPDFPASVNNLQEQDVLEHCALKVAHDILGVRCSFHSSDGRILLRFIDPDASLVHAVRSVTGTT.

This is an uncharacterized protein from Treponema pallidum (strain Nichols).